The sequence spans 346 residues: dTDP-glucose 4,6-dehydratase (346 aa).

NAD(+) contacts are provided by residues F17–I18, D38–T41, D64–I65, L86–S90, and T105. S90 is a substrate binding site. T139 serves as a coordination point for substrate. Catalysis depends on D140, which acts as the Proton donor. Catalysis depends on proton acceptor residues E141 and Y165. Y165 to K169 lines the NAD(+) pocket. N194 lines the substrate pocket. Residue N195 coordinates NAD(+). Substrate is bound by residues K204 to L205, P220 to Y222, R229, N264, and D298 to H302.

The protein belongs to the NAD(P)-dependent epimerase/dehydratase family. dTDP-glucose dehydratase subfamily. Homodimer. It depends on NAD(+) as a cofactor.

It carries out the reaction dTDP-alpha-D-glucose = dTDP-4-dehydro-6-deoxy-alpha-D-glucose + H2O. It functions in the pathway carbohydrate biosynthesis; dTDP-L-rhamnose biosynthesis. Its pathway is bacterial outer membrane biogenesis; LPS O-antigen biosynthesis. In terms of biological role, catalyzes the dehydration of dTDP-D-glucose to form dTDP-6-deoxy-D-xylo-4-hexulose via a three-step process involving oxidation, dehydration and reduction. This chain is dTDP-glucose 4,6-dehydratase, found in Neisseria gonorrhoeae.